A 120-amino-acid chain; its full sequence is Large ribosomal subunit protein uL22 (120 aa).

Belongs to the universal ribosomal protein uL22 family. Part of the 50S ribosomal subunit.

Its function is as follows. This protein binds specifically to 23S rRNA; its binding is stimulated by other ribosomal proteins, e.g. L4, L17, and L20. It is important during the early stages of 50S assembly. It makes multiple contacts with different domains of the 23S rRNA in the assembled 50S subunit and ribosome. In terms of biological role, the globular domain of the protein is located near the polypeptide exit tunnel on the outside of the subunit, while an extended beta-hairpin is found that lines the wall of the exit tunnel in the center of the 70S ribosome. In Corynebacterium efficiens (strain DSM 44549 / YS-314 / AJ 12310 / JCM 11189 / NBRC 100395), this protein is Large ribosomal subunit protein uL22.